The following is a 136-amino-acid chain: Biopolymer transport protein exbD2 (136 aa).

Topologically, residues 1 to 23 (MAFSTGGNRGPMADINVTPLVDV) are cytoplasmic. The helical transmembrane segment at 24–44 (MLVLLIIFIVTAPIMTYPIAV) threads the bilayer. The Periplasmic segment spans residues 45–136 (DLPQRVLNPP…SQMKKIGFMQ (92 aa)).

The protein belongs to the ExbD/TolR family. The accessory proteins ExbB and ExbD seem to form a complex with TonB.

The protein localises to the cell inner membrane. Its function is as follows. Involved in the TonB-dependent energy-dependent transport of various receptor-bound substrates. This Xanthomonas campestris pv. campestris (strain ATCC 33913 / DSM 3586 / NCPPB 528 / LMG 568 / P 25) protein is Biopolymer transport protein exbD2 (exbD2).